A 1641-amino-acid polypeptide reads, in one-letter code: Histone-lysine N-methyltransferase SETD1 (1641 aa).

Positions 1 to 23 (MQDVRNINLVNNSSNSHDSSLAN) are disordered. The span at 8-23 (NLVNNSSNSHDSSLAN) shows a compositional bias: low complexity. In terms of domain architecture, RRM spans 101–179 (VEVTIVNLND…KILDVFCDPF (79 aa)). 6 disordered regions span residues 236-384 (YTTQ…IDQR), 537-596 (APPF…SDEE), 831-915 (RIRK…SSSS), 930-949 (KART…NLNQ), 1119-1155 (QEKR…RKTA), and 1205-1226 (NSKG…SSQA). The segment covering 244 to 284 (IPNRSRDRNWNRDKERERDRHFKERSRHSSERSYDRDRGMR) has biased composition (basic and acidic residues). Residues 291 to 300 (IRRRRTFYRR) are compositionally biased toward basic residues. Basic and acidic residues-rich tracts occupy residues 308-341 (EDSR…ESFR) and 349-384 (KGRD…IDQR). Low complexity predominate over residues 556–568 (EVFSDVNSDSNNS). Basic and acidic residues-rich tracts occupy residues 569–579 (ENKKRSCEKNN) and 844–867 (NFLE…KEDS). Over residues 904–915 (SASSFFSSSSSS) the composition is skewed to low complexity. Basic and acidic residues-rich tracts occupy residues 930–939 (KARTSEEDSP) and 1119–1128 (QEKRIEKSLD). The stretch at 1091-1132 (SEEEKEYQERRKRNTEYMAQMEREFLEEQEKRIEKSLDKNLQ) forms a coiled coil. Polar residues-rich tracts occupy residues 1129 to 1145 (KNLQ…NSPR) and 1205 to 1217 (NSKG…QSPV). A RxxxRR motif motif is present at residues 1473 to 1478 (RSNQRR). The SET domain maps to 1502–1619 (KQLKFAKSAI…INEEITYDYK (118 aa)). Residue tyrosine 1618 coordinates S-adenosyl-L-methionine. One can recognise a Post-SET domain in the interval 1625–1641 (EKIPCLCGAQGCRGTLN).

Belongs to the class V-like SAM-binding methyltransferase superfamily. Component of the Set1C/COMPASS complex, composed at least of the catalytic subunit Set1, wds/WDR5, Wdr82, Rbbp5, ash2, Cfp1/CXXC1, hcf and Dpy-30L1.

The protein localises to the nucleus. It localises to the chromosome. It catalyses the reaction L-lysyl(4)-[histone H3] + 3 S-adenosyl-L-methionine = N(6),N(6),N(6)-trimethyl-L-lysyl(4)-[histone H3] + 3 S-adenosyl-L-homocysteine + 3 H(+). It carries out the reaction N(6)-methyl-L-lysyl(4)-[histone H3] + S-adenosyl-L-methionine = N(6),N(6)-dimethyl-L-lysyl(4)-[histone H3] + S-adenosyl-L-homocysteine + H(+). The catalysed reaction is N(6),N(6)-dimethyl-L-lysyl(4)-[histone H3] + S-adenosyl-L-methionine = N(6),N(6),N(6)-trimethyl-L-lysyl(4)-[histone H3] + S-adenosyl-L-homocysteine + H(+). In terms of biological role, catalytic component of the COMPASS (Set1C) complex that specifically mono-, di- and trimethylates histone H3 to form H3K4me1/2/3. Binds RNAs which might negatively affect its histone methyltransferase activity. COMPASS recognizes ubiquitinated H2B on one face of the nucleosome which stimulates the methylation of H3 on the opposing face. Set1-dependent trimethylation regulates chromatin changes at active promoters that ensure optimal RNA polymerase II release into productive elongation, thereby contributing to optimal transcription. The chain is Histone-lysine N-methyltransferase SETD1 from Drosophila melanogaster (Fruit fly).